The following is a 388-amino-acid chain: Protein RecA (388 aa).

An ATP-binding site is contributed by 79–86 (GPESSGKT). The segment at 347-388 (IDGEEVSEQDTENKKDEPKKEEAVNEEVPLDLGDELEIEIEE) is disordered. A compositionally biased stretch (basic and acidic residues) spans 357–369 (TENKKDEPKKEEA). The segment covering 370-388 (VNEEVPLDLGDELEIEIEE) has biased composition (acidic residues).

It belongs to the RecA family.

It is found in the cytoplasm. Can catalyze the hydrolysis of ATP in the presence of single-stranded DNA, the ATP-dependent uptake of single-stranded DNA by duplex DNA, and the ATP-dependent hybridization of homologous single-stranded DNAs. It interacts with LexA causing its activation and leading to its autocatalytic cleavage. This Streptococcus pneumoniae (strain Hungary19A-6) protein is Protein RecA.